Consider the following 230-residue polypeptide: Spliceosome-associated protein CWC15 homolog (230 aa).

Disordered regions lie at residues 1-157 and 164-183; these read MTTA…EEKQ and AGNPLLNDTPAGSSTSGGDF. Over residues 25–34 the composition is skewed to polar residues; the sequence is KLSNQYSSKD. Coiled-coil stretches lie at residues 47 to 82 and 119 to 164; these read GQETEADLRKKDLRRELEDKERNAIREKRARDSASS and DSDE…NILA. Basic and acidic residues predominate over residues 52-78; sequence ADLRKKDLRRELEDKERNAIREKRARD. The segment covering 104 to 125 has biased composition (acidic residues); the sequence is DADEAVDELNSSDDDDSDEDDT. Residues 131–157 are compositionally biased toward basic and acidic residues; the sequence is ELEKIKKERAEEKAARDEEIKEKEEKQ.

The protein belongs to the CWC15 family. As to quaternary structure, component of spliceosomal complex.

It is found in the nucleus. Functionally, component of a spliceosomal complex that is required for activating pre-mRNA splicing. This Caenorhabditis elegans protein is Spliceosome-associated protein CWC15 homolog.